The sequence spans 304 residues: Quinolinate synthase (304 aa).

Residues His24 and Ser41 each coordinate iminosuccinate. Cys86 contributes to the [4Fe-4S] cluster binding site. Iminosuccinate is bound by residues 112–114 and Ser129; that span reads YVN. Cys171 provides a ligand contact to [4Fe-4S] cluster. Residues 197–199 and Thr214 each bind iminosuccinate; that span reads HPE. Cys259 lines the [4Fe-4S] cluster pocket.

Belongs to the quinolinate synthase family. Type 2 subfamily. The cofactor is [4Fe-4S] cluster.

Its subcellular location is the cytoplasm. It catalyses the reaction iminosuccinate + dihydroxyacetone phosphate = quinolinate + phosphate + 2 H2O + H(+). The protein operates within cofactor biosynthesis; NAD(+) biosynthesis; quinolinate from iminoaspartate: step 1/1. Its function is as follows. Catalyzes the condensation of iminoaspartate with dihydroxyacetone phosphate to form quinolinate. The chain is Quinolinate synthase from Geotalea uraniireducens (strain Rf4) (Geobacter uraniireducens).